The chain runs to 199 residues: Inducible T-cell costimulator (199 aa).

Residues 1–20 form the signal peptide; it reads MKSGLWYFFLFCLRIKVLTG. The Extracellular portion of the chain corresponds to 21 to 140; that stretch reads EINGSANYEM…YESQLCCQLK (120 aa). Residues 30-132 form the Ig-like V-type domain; sequence MFIFHNGGVQ…LTGGYLHIYE (103 aa). Disulfide bonds link Cys-42–Cys-109 and Cys-63–Cys-83. N-linked (GlcNAc...) asparagine glycans are attached at residues Asn-89 and Asn-110. Residues 141-161 traverse the membrane as a helical segment; it reads FWLPIGCAAFVVVCILGCILI. Over 162 to 199 the chain is Cytoplasmic; that stretch reads CWLTKKKYSSSVHDPNGEYMFMRAVNTAKKSRLTDVTL.

In terms of assembly, homodimer; disulfide-linked. Interacts with ICOSLG. Interacts with PIK3R1. Interacts with TBK1; this interaction is critical for the maturation of T follicular regulatory cells. N-glycosylated. In terms of tissue distribution, activated T-cells. Highly expressed on tonsillar T-cells, which are closely associated with B-cells in the apical light zone of germinal centers, the site of terminal B-cell maturation. Expressed at lower levels in thymus, lung, lymph node and peripheral blood leukocytes. Expressed in the medulla of fetal and newborn thymus.

Its subcellular location is the cell membrane. The protein resides in the secreted. Stimulatory receptor expressed in activated or antigen-experienced T-cells that plays an important role in the immune response. Upon binding to its ligand ICOSL expressed on antigen presenting cells (APCs), delivers costimulatory signals that enhances all basic T-cell responses to a foreign antigen, namely proliferation, secretion of lymphokines including IL10, up-regulation of molecules that mediate cell-cell interaction, and effective help for antibody secretion by B-cells. Also acts as a costimulatory receptor critical for the differentiation of T follicular regulatory cells upon immune challenges such as viral infection. Mechanistically, potentiates TCR-induced calcium flux by augmenting PLCG1 activation and actin remodeling. In addition, activates PI3K signaling pathways independently of calcium flux. Essential both for efficient interaction between T and B-cells and for normal antibody responses to T-cell dependent antigens. Prevents the apoptosis of pre-activated T-cells. Plays a critical role in CD40-mediated class switching of immunoglobin isotypes. The sequence is that of Inducible T-cell costimulator (ICOS) from Homo sapiens (Human).